The sequence spans 154 residues: Putative pre-16S rRNA nuclease (154 aa).

It belongs to the YqgF nuclease family.

Its subcellular location is the cytoplasm. In terms of biological role, could be a nuclease involved in processing of the 5'-end of pre-16S rRNA. In Rickettsia peacockii (strain Rustic), this protein is Putative pre-16S rRNA nuclease.